The sequence spans 662 residues: UvrABC system protein B (662 aa).

The 390-residue stretch at 25–414 (AGLNSKKRSQ…GTVVELIIRP (390 aa)) folds into the Helicase ATP-binding domain. 38 to 45 (GITGSGKT) serves as a coordination point for ATP. Positions 91 to 114 (YYDYYQPEAYIVRTDTFIEKDSSI) match the Beta-hairpin motif. Positions 430–592 (QVEDLISEIQ…IIPKTINSAI (163 aa)) constitute a Helicase C-terminal domain. In terms of domain architecture, UVR spans 622–657 (KSYMDKLKKEMFKAASNLEFEQAAKLRNQLKTLEKA).

The protein belongs to the UvrB family. As to quaternary structure, forms a heterotetramer with UvrA during the search for lesions. Interacts with UvrC in an incision complex.

It is found in the cytoplasm. Functionally, the UvrABC repair system catalyzes the recognition and processing of DNA lesions. A damage recognition complex composed of 2 UvrA and 2 UvrB subunits scans DNA for abnormalities. Upon binding of the UvrA(2)B(2) complex to a putative damaged site, the DNA wraps around one UvrB monomer. DNA wrap is dependent on ATP binding by UvrB and probably causes local melting of the DNA helix, facilitating insertion of UvrB beta-hairpin between the DNA strands. Then UvrB probes one DNA strand for the presence of a lesion. If a lesion is found the UvrA subunits dissociate and the UvrB-DNA preincision complex is formed. This complex is subsequently bound by UvrC and the second UvrB is released. If no lesion is found, the DNA wraps around the other UvrB subunit that will check the other stand for damage. The polypeptide is UvrABC system protein B (Rickettsia typhi (strain ATCC VR-144 / Wilmington)).